We begin with the raw amino-acid sequence, 743 residues long: 1,4-alpha-glucan branching enzyme GlgB (743 aa).

D416 (nucleophile) is an active-site residue. Residue E469 is the Proton donor of the active site.

This sequence belongs to the glycosyl hydrolase 13 family. GlgB subfamily. In terms of assembly, monomer.

It carries out the reaction Transfers a segment of a (1-&gt;4)-alpha-D-glucan chain to a primary hydroxy group in a similar glucan chain.. The protein operates within glycan biosynthesis; glycogen biosynthesis. In terms of biological role, catalyzes the formation of the alpha-1,6-glucosidic linkages in glycogen by scission of a 1,4-alpha-linked oligosaccharide from growing alpha-1,4-glucan chains and the subsequent attachment of the oligosaccharide to the alpha-1,6 position. This chain is 1,4-alpha-glucan branching enzyme GlgB, found in Shewanella baltica (strain OS195).